The sequence spans 177 residues: Large ribosomal subunit protein uL6 (177 aa).

Belongs to the universal ribosomal protein uL6 family. As to quaternary structure, part of the 50S ribosomal subunit.

Functionally, this protein binds to the 23S rRNA, and is important in its secondary structure. It is located near the subunit interface in the base of the L7/L12 stalk, and near the tRNA binding site of the peptidyltransferase center. The protein is Large ribosomal subunit protein uL6 of Actinobacillus succinogenes (strain ATCC 55618 / DSM 22257 / CCUG 43843 / 130Z).